A 194-amino-acid polypeptide reads, in one-letter code: Thioredoxin peroxidase (194 aa).

Residues Leu-2–Phe-160 form the Thioredoxin domain. Cys-47 (cysteine sulfenic acid (-SOH) intermediate) is an active-site residue.

The protein belongs to the peroxiredoxin family. AhpC/Prx1 subfamily. In terms of assembly, homodimer; disulfide-linked, upon oxidation.

It catalyses the reaction a hydroperoxide + [thioredoxin]-dithiol = an alcohol + [thioredoxin]-disulfide + H2O. Functionally, antioxidant. Could be involved in protection against reactive oxygen species (ROS) generated by metabolic processes and/or protection of the parasite against ROS released by immune effector cells. Thiol-specific peroxidase that catalyzes the reduction of hydrogen peroxide and organic hydroperoxides to water and alcohols, respectively. Plays a role in cell protection against oxidative stress by detoxifying peroxides and as sensor of hydrogen peroxide-mediated signaling events. This is Thioredoxin peroxidase from Fasciola hepatica (Liver fluke).